The chain runs to 185 residues: Large ribosomal subunit protein uL5 (185 aa).

The protein belongs to the universal ribosomal protein uL5 family. Part of the 50S ribosomal subunit; part of the 5S rRNA/L5/L18/L25 subcomplex. Contacts the 5S rRNA and the P site tRNA. Forms a bridge to the 30S subunit in the 70S ribosome.

This is one of the proteins that bind and probably mediate the attachment of the 5S RNA into the large ribosomal subunit, where it forms part of the central protuberance. In the 70S ribosome it contacts protein S13 of the 30S subunit (bridge B1b), connecting the 2 subunits; this bridge is implicated in subunit movement. Contacts the P site tRNA; the 5S rRNA and some of its associated proteins might help stabilize positioning of ribosome-bound tRNAs. This Bartonella tribocorum (strain CIP 105476 / IBS 506) protein is Large ribosomal subunit protein uL5.